The primary structure comprises 144 residues: Large ribosomal subunit protein uL15 (144 aa).

A disordered region spans residues 1 to 53 (MRLNTLSPAEGAKHNAKRLGRGIGSGLGKTSGRGHKGQKARTGGGVRRGFEGG). Residues 21 to 31 (RGIGSGLGKTS) are compositionally biased toward gly residues.

Belongs to the universal ribosomal protein uL15 family. Part of the 50S ribosomal subunit.

Functionally, binds to the 23S rRNA. The chain is Large ribosomal subunit protein uL15 from Histophilus somni (strain 129Pt) (Haemophilus somnus).